Reading from the N-terminus, the 60-residue chain is Large ribosomal subunit protein eL37 (60 aa).

Residues C18, C21, C33, and C36 each contribute to the Zn(2+) site. A C4-type zinc finger spans residues 18–36 (CRRCGKNSYHVRKKVCAAC).

It belongs to the eukaryotic ribosomal protein eL37 family. The cofactor is Zn(2+).

Functionally, binds to the 23S rRNA. This Methanothermobacter thermautotrophicus (strain ATCC 29096 / DSM 1053 / JCM 10044 / NBRC 100330 / Delta H) (Methanobacterium thermoautotrophicum) protein is Large ribosomal subunit protein eL37 (rpl37e).